Reading from the N-terminus, the 226-residue chain is Cold-regulated 413 inner membrane protein 2, chloroplastic (226 aa).

The transit peptide at 1–76 directs the protein to the chloroplast; the sequence is MASLCLSSSR…RKRGSSVVCY (76 aa). At 77 to 79 the chain is on the stromal side; it reads ATP. Residues 80–100 form a helical membrane-spanning segment; the sequence is MLSVHNLQWISTISCVALMFA. Over 101 to 103 the chain is Chloroplast intermembrane; sequence RGT. Residues 104–124 form a helical membrane-spanning segment; that stretch reads GIHKSFVVPLFALQAPMGIVS. The Stromal portion of the chain corresponds to 125-129; that stretch reads WMKGE. Residues 130-150 traverse the membrane as a helical segment; that stretch reads YGIWAAFLALLTRLFFSFPVE. Topologically, residues 151–152 are chloroplast intermembrane; that stretch reads LE. Residues 153–173 traverse the membrane as a helical segment; the sequence is LPFIALLLVIVAPYQVMSIRG. The Stromal segment spans residues 174 to 176; sequence KQE. Residues 177-197 form a helical membrane-spanning segment; it reads GAILSLAISCFLAFQHFSRAG. Over 198–205 the chain is Chloroplast intermembrane; the sequence is TLQKAFDQ. The helical transmembrane segment at 206–226 threads the bilayer; sequence NSVLATVAIIGVTVVSFLFLI.

The protein belongs to the Cold-regulated 413 protein family.

It is found in the plastid. The protein resides in the chloroplast inner membrane. This is Cold-regulated 413 inner membrane protein 2, chloroplastic (COR413IM2) from Arabidopsis thaliana (Mouse-ear cress).